A 482-amino-acid chain; its full sequence is Ribosomal RNA small subunit methyltransferase F (482 aa).

Residues 119–125, Glu-143, Asp-170, and Asp-188 contribute to the S-adenosyl-L-methionine site; that span reads ASAPGSK. The active-site Nucleophile is Cys-241.

It belongs to the class I-like SAM-binding methyltransferase superfamily. RsmB/NOP family.

The protein localises to the cytoplasm. It catalyses the reaction cytidine(1407) in 16S rRNA + S-adenosyl-L-methionine = 5-methylcytidine(1407) in 16S rRNA + S-adenosyl-L-homocysteine + H(+). Functionally, specifically methylates the cytosine at position 1407 (m5C1407) of 16S rRNA. This chain is Ribosomal RNA small subunit methyltransferase F, found in Shewanella sp. (strain ANA-3).